A 191-amino-acid chain; its full sequence is Ribosomal RNA small subunit methyltransferase G (191 aa).

S-adenosyl-L-methionine-binding positions include Gly-62, Phe-67, 111 to 112 (IE), and Arg-124.

Belongs to the methyltransferase superfamily. RNA methyltransferase RsmG family.

The protein resides in the cytoplasm. It catalyses the reaction guanosine(527) in 16S rRNA + S-adenosyl-L-methionine = N(7)-methylguanosine(527) in 16S rRNA + S-adenosyl-L-homocysteine. In terms of biological role, specifically methylates the N7 position of guanine in position 527 of 16S rRNA. The sequence is that of Ribosomal RNA small subunit methyltransferase G from Rickettsia typhi (strain ATCC VR-144 / Wilmington).